The sequence spans 405 residues: Tryptophan synthase beta chain (405 aa).

An N6-(pyridoxal phosphate)lysine modification is found at K98.

Belongs to the TrpB family. Tetramer of two alpha and two beta chains. It depends on pyridoxal 5'-phosphate as a cofactor.

The catalysed reaction is (1S,2R)-1-C-(indol-3-yl)glycerol 3-phosphate + L-serine = D-glyceraldehyde 3-phosphate + L-tryptophan + H2O. Its pathway is amino-acid biosynthesis; L-tryptophan biosynthesis; L-tryptophan from chorismate: step 5/5. The beta subunit is responsible for the synthesis of L-tryptophan from indole and L-serine. This chain is Tryptophan synthase beta chain, found in Parvibaculum lavamentivorans (strain DS-1 / DSM 13023 / NCIMB 13966).